Reading from the N-terminus, the 420-residue chain is MVEKRTQPLARDAMAYVLAGGRGSRLKELTDRRAKPAVYFGGKARIIDFALSNALNSGIRRIGVATQYKAHSLIRHLQRGWNFFRPERNESFDILPASQRVSETQWYEGTADAVFQNIDIIEDHGVEYMVILAGDHIYKMDYELMLQQHVDSGADVTIGCLEVPRMEATGFGVMHVDNEDRIIAFVEKPADPPGIPGNPEMALASMGIYVFHTKFLMDMLRRDAADPKSSRDFGKDIIPYIVEHGKAVAHRFTHSCVRSDFEREAYWRDVGTIDAYWQANIDLTHITPELDIYDSTWPIWTFSEIKPPAKFVHDDEDRRGSATSSLVSGDCIISGAALNKSLLFTGVRVNSYSRLENAVVLPDVTIGRHSILRNVVIDSRVVIPEGLVVGDDPELDAKRFRRSENGVCLITQTMIDKLGM.

Residues Tyr-107, Gly-172, 187 to 188 (EK), and Ser-205 each bind alpha-D-glucose 1-phosphate.

The protein belongs to the bacterial/plant glucose-1-phosphate adenylyltransferase family. Homotetramer.

It carries out the reaction alpha-D-glucose 1-phosphate + ATP + H(+) = ADP-alpha-D-glucose + diphosphate. The protein operates within glycan biosynthesis; glycogen biosynthesis. Functionally, involved in the biosynthesis of ADP-glucose, a building block required for the elongation reactions to produce glycogen. Catalyzes the reaction between ATP and alpha-D-glucose 1-phosphate (G1P) to produce pyrophosphate and ADP-Glc. This chain is Glucose-1-phosphate adenylyltransferase, found in Sinorhizobium fredii (strain NBRC 101917 / NGR234).